A 295-amino-acid polypeptide reads, in one-letter code: 4-hydroxy-3-methylbut-2-enyl diphosphate reductase (295 aa).

Cys12 lines the [4Fe-4S] cluster pocket. The (2E)-4-hydroxy-3-methylbut-2-enyl diphosphate site is built by His43 and His81. 2 residues coordinate dimethylallyl diphosphate: His43 and His81. Positions 43 and 81 each coordinate isopentenyl diphosphate. Cys103 contributes to the [4Fe-4S] cluster binding site. His131 contacts (2E)-4-hydroxy-3-methylbut-2-enyl diphosphate. Residue His131 coordinates dimethylallyl diphosphate. His131 lines the isopentenyl diphosphate pocket. Glu133 functions as the Proton donor in the catalytic mechanism. Thr171 serves as a coordination point for (2E)-4-hydroxy-3-methylbut-2-enyl diphosphate. Cys199 lines the [4Fe-4S] cluster pocket. 3 residues coordinate (2E)-4-hydroxy-3-methylbut-2-enyl diphosphate: Ser227, Asn229, and Ser272. Residues Ser227, Asn229, and Ser272 each contribute to the dimethylallyl diphosphate site. Residues Ser227, Asn229, and Ser272 each contribute to the isopentenyl diphosphate site.

It belongs to the IspH family. [4Fe-4S] cluster serves as cofactor.

It carries out the reaction isopentenyl diphosphate + 2 oxidized [2Fe-2S]-[ferredoxin] + H2O = (2E)-4-hydroxy-3-methylbut-2-enyl diphosphate + 2 reduced [2Fe-2S]-[ferredoxin] + 2 H(+). It catalyses the reaction dimethylallyl diphosphate + 2 oxidized [2Fe-2S]-[ferredoxin] + H2O = (2E)-4-hydroxy-3-methylbut-2-enyl diphosphate + 2 reduced [2Fe-2S]-[ferredoxin] + 2 H(+). The protein operates within isoprenoid biosynthesis; dimethylallyl diphosphate biosynthesis; dimethylallyl diphosphate from (2E)-4-hydroxy-3-methylbutenyl diphosphate: step 1/1. It functions in the pathway isoprenoid biosynthesis; isopentenyl diphosphate biosynthesis via DXP pathway; isopentenyl diphosphate from 1-deoxy-D-xylulose 5-phosphate: step 6/6. Its function is as follows. Catalyzes the conversion of 1-hydroxy-2-methyl-2-(E)-butenyl 4-diphosphate (HMBPP) into a mixture of isopentenyl diphosphate (IPP) and dimethylallyl diphosphate (DMAPP). Acts in the terminal step of the DOXP/MEP pathway for isoprenoid precursor biosynthesis. The protein is 4-hydroxy-3-methylbut-2-enyl diphosphate reductase of Symbiobacterium thermophilum (strain DSM 24528 / JCM 14929 / IAM 14863 / T).